The following is a 340-amino-acid chain: Phosphoribosylformylglycinamidine cyclo-ligase (340 aa).

It belongs to the AIR synthase family.

Its subcellular location is the cytoplasm. The catalysed reaction is 2-formamido-N(1)-(5-O-phospho-beta-D-ribosyl)acetamidine + ATP = 5-amino-1-(5-phospho-beta-D-ribosyl)imidazole + ADP + phosphate + H(+). It functions in the pathway purine metabolism; IMP biosynthesis via de novo pathway; 5-amino-1-(5-phospho-D-ribosyl)imidazole from N(2)-formyl-N(1)-(5-phospho-D-ribosyl)glycinamide: step 2/2. The sequence is that of Phosphoribosylformylglycinamidine cyclo-ligase from Streptococcus pyogenes serotype M3 (strain ATCC BAA-595 / MGAS315).